Here is a 192-residue protein sequence, read N- to C-terminus: UPF0312 protein PSPTO_5071 (192 aa).

The first 23 residues, 1–23 (MLKKSLAALALGTALLSAGQAMA), serve as a signal peptide directing secretion.

The protein belongs to the UPF0312 family. Type 1 subfamily.

The protein resides in the periplasm. In Pseudomonas syringae pv. tomato (strain ATCC BAA-871 / DC3000), this protein is UPF0312 protein PSPTO_5071.